We begin with the raw amino-acid sequence, 445 residues long: Solute carrier family 52, riboflavin transporter, member 2 (445 aa).

6 consecutive transmembrane segments (helical) span residues 14-34 (LLVA…WVEL), 47-67 (LPSY…VVTL), 86-106 (VLGM…APVA), 112-132 (VAFL…NVTF), 147-167 (FFLG…VQGV), and 196-216 (FFWA…GLLL). The tract at residues 228-264 (ELGSGLQVGAPGAEEEVEESSPLQEPPSQAAGTTPGP) is disordered. Over residues 247-258 (SSPLQEPPSQAA) the composition is skewed to low complexity. Transmembrane regions (helical) follow at residues 277–297 (ACLL…LPAV), 312–332 (LAVV…MGVL), 339–359 (LGGL…LAVL), 366–386 (VGTS…LGVF), and 404–424 (ALLA…VAMF).

The protein belongs to the riboflavin transporter family. Highly expressed in brain, fetal brain and salivary gland. Weakly expressed in other tissues.

It is found in the cell membrane. The catalysed reaction is riboflavin(in) = riboflavin(out). Its activity is regulated as follows. Riboflavin transport is Na(+)-independent but moderately pH-sensitive. Activity is strongly inhibited by riboflavin analogs, such as lumiflavin. Weakly inhibited by flavin adenine dinucleotide (FAD) and flavin mononucleotide (FMN). In terms of biological role, plasma membrane transporter mediating the uptake by cells of the water soluble vitamin B2/riboflavin that plays a key role in biochemical oxidation-reduction reactions of the carbohydrate, lipid, and amino acid metabolism. Humans are unable to synthesize vitamin B2/riboflavin and must obtain it via intestinal absorption. May also act as a receptor for 4-hydroxybutyrate. Its function is as follows. (Microbial infection) In case of infection by retroviruses, acts as a cell receptor to retroviral envelopes similar to the porcine endogenous retrovirus (PERV-A). This chain is Solute carrier family 52, riboflavin transporter, member 2 (SLC52A2), found in Homo sapiens (Human).